We begin with the raw amino-acid sequence, 279 residues long: Eukaryotic translation initiation factor 3 subunit J (279 aa).

Disordered stretches follow at residues M1 to S74 and E229 to M279. The span at W20–E39 shows a compositional bias: acidic residues. A coiled-coil region spans residues D34 to S74. The segment covering V40 to N67 has biased composition (basic and acidic residues). The segment covering D268–M279 has biased composition (acidic residues).

The protein belongs to the eIF-3 subunit J family. Component of the eukaryotic translation initiation factor 3 (eIF-3) complex.

It localises to the cytoplasm. In terms of biological role, component of the eukaryotic translation initiation factor 3 (eIF-3) complex, which is involved in protein synthesis of a specialized repertoire of mRNAs and, together with other initiation factors, stimulates binding of mRNA and methionyl-tRNAi to the 40S ribosome. The eIF-3 complex specifically targets and initiates translation of a subset of mRNAs involved in cell proliferation. This chain is Eukaryotic translation initiation factor 3 subunit J, found in Meyerozyma guilliermondii (strain ATCC 6260 / CBS 566 / DSM 6381 / JCM 1539 / NBRC 10279 / NRRL Y-324) (Yeast).